The chain runs to 295 residues: Iron-sulfur cluster carrier protein (295 aa).

38–45 (GKGGVGKS) serves as a coordination point for ATP.

Belongs to the Mrp/NBP35 ATP-binding proteins family. As to quaternary structure, homodimer.

Functionally, binds and transfers iron-sulfur (Fe-S) clusters to target apoproteins. Can hydrolyze ATP. The protein is Iron-sulfur cluster carrier protein of Pyrococcus abyssi (strain GE5 / Orsay).